The chain runs to 121 residues: Glycine cleavage system H protein (121 aa).

One can recognise a Lipoyl-binding domain in the interval 16-98 (VATVGITAYA…ESGGWFAKIK (83 aa)). Residue lysine 57 is modified to N6-lipoyllysine.

The protein belongs to the GcvH family. In terms of assembly, the glycine cleavage system is composed of four proteins: P, T, L and H. (R)-lipoate is required as a cofactor.

The glycine cleavage system catalyzes the degradation of glycine. The H protein shuttles the methylamine group of glycine from the P protein to the T protein. The polypeptide is Glycine cleavage system H protein (Caulobacter vibrioides (strain NA1000 / CB15N) (Caulobacter crescentus)).